Here is a 478-residue protein sequence, read N- to C-terminus: MAADGLPVRVLPTLDPSEGHTFLEPSKRINEGDDVSEFLCSKAYVDIMTFLLQLNRSMFPAKLPDGRVQTWPLNTEAVGFSAPVRQLQQLLSKIEDLLDATPLMPGEWRYANGAFQVWHDKVKKATPSLLAECLPAEILHAPSSDPNGPTAEVELTEYFLGSWGSRERMDYGTGHELSFLTFLGAIWKLNGFPKNEPGVEERTIVLGVIEPYLELIRAVIKKYKLEPAGSHGVWGLDDHSFIPYIFGSAQLGPAISNSDLVPETGSLPDAVDPDGVTKANVVEKERKVNMYFSAIGFINDVKKGPFWEHSQMLYNISGVQAGWAKINKGMIKMYNAEVLSKFPVVQHFRFGSLFSWNRDPSAIPPPSRIHTSSGPETRPRQVPPSARQDPGPGTKAPWATASQSTPPPSTGTAAPWATSRAGREPPTTSRIPSALPDTSRLPPGPMAPTRAPWASSQPAGPAPTGDPNDITTKAPWAK.

Residues 359–478 are disordered; sequence DPSAIPPPSR…DITTKAPWAK (120 aa). Residues 396–419 show a composition bias toward low complexity; it reads APWATASQSTPPPSTGTAAPWATS.

The protein belongs to the PTPA-type PPIase family.

The protein resides in the cytoplasm. The protein localises to the nucleus. The catalysed reaction is [protein]-peptidylproline (omega=180) = [protein]-peptidylproline (omega=0). In terms of biological role, PPIases accelerate the folding of proteins. It catalyzes the cis-trans isomerization of proline imidic peptide bonds in oligopeptides. Acts as a regulatory subunit for PP2A-like phosphatases modulating their activity or substrate specificity, probably by inducing a conformational change in the catalytic subunit, a direct target of the PPIase. Can reactivate inactive phosphatase PP2A-phosphatase methylesterase complexes (PP2Ai) in presence of ATP and Mg(2+) by dissociating the inactive form from the complex. The protein is Serine/threonine-protein phosphatase 2A activator 1 (rrd1) of Aspergillus oryzae (strain ATCC 42149 / RIB 40) (Yellow koji mold).